The sequence spans 459 residues: Cysteine--tRNA ligase (459 aa).

A Zn(2+)-binding site is contributed by Cys-28. The 'HIGH' region motif lies at Val-30–His-40. Zn(2+) is bound by residues Cys-209, His-234, and Glu-238. The 'KMSKS' region signature appears at Lys-266–Ser-270. Position 269 (Lys-269) interacts with ATP.

It belongs to the class-I aminoacyl-tRNA synthetase family. As to quaternary structure, monomer. Requires Zn(2+) as cofactor.

It localises to the cytoplasm. The catalysed reaction is tRNA(Cys) + L-cysteine + ATP = L-cysteinyl-tRNA(Cys) + AMP + diphosphate. This Shewanella baltica (strain OS223) protein is Cysteine--tRNA ligase.